The primary structure comprises 226 residues: uncharacterized protein (226 aa).

The HTH cro/C1-type domain maps to 168–226; the sequence is ISALRNKLGLTQTDLGKRINVDANVIRNIETGDLVAFNVQDPMVRSLAYALGIRTIKYQ. The H-T-H motif DNA-binding region spans 179-198; the sequence is QTDLGKRINVDANVIRNIET.

This is an uncharacterized protein from Acanthamoeba polyphaga mimivirus (APMV).